The following is a 769-amino-acid chain: Wall-associated receptor kinase-like 10 (769 aa).

A signal peptide spans 1 to 24 (MSSNCSCSLLSLFSLLLIIDLTVA). Residues 25-358 (SSCPKTCGGI…YTCEYTNHRP (334 aa)) are Extracellular-facing. N-linked (GlcNAc...) asparagine glycosylation is found at asparagine 58, asparagine 114, asparagine 134, asparagine 182, asparagine 187, asparagine 237, asparagine 262, and asparagine 296. The interval 291 to 351 (CLCDYNSTTT…CVNLLGGYTC (61 aa)) is atypical EGF-like. Cystine bridges form between cysteine 293–cysteine 305, cysteine 327–cysteine 342, and cysteine 337–cysteine 351. Residues 359–379 (LVIGLSTSFSTLVFIGGIYWL) form a helical membrane-spanning segment. The Cytoplasmic portion of the chain corresponds to 380-769 (YKFIRRQRRL…RSDVEPLFPR (390 aa)). The 286-residue stretch at 433 to 718 (FSLTRILGEG…SYSEDMQPYE (286 aa)) folds into the Protein kinase domain. ATP contacts are provided by residues 439-447 (LGEGGQGTV) and lysine 461. A Phosphotyrosine modification is found at tyrosine 506. Catalysis depends on aspartate 559, which acts as the Proton acceptor. Residues threonine 593 and threonine 598 each carry the phosphothreonine modification. At tyrosine 606 the chain carries Phosphotyrosine.

Belongs to the protein kinase superfamily. Ser/Thr protein kinase family.

It is found in the membrane. It carries out the reaction L-seryl-[protein] + ATP = O-phospho-L-seryl-[protein] + ADP + H(+). It catalyses the reaction L-threonyl-[protein] + ATP = O-phospho-L-threonyl-[protein] + ADP + H(+). In terms of biological role, serine/threonine-protein kinase that may function as a signaling receptor of extracellular matrix component. The sequence is that of Wall-associated receptor kinase-like 10 (WAKL10) from Arabidopsis thaliana (Mouse-ear cress).